The primary structure comprises 273 residues: Large ribosomal subunit protein uL2 (273 aa).

Disordered regions lie at residues 28-53 (KPFA…TTRH) and 221-273 (RGTA…RRSK). Residues 39 to 48 (KSGGRNNNGR) show a composition bias toward low complexity.

This sequence belongs to the universal ribosomal protein uL2 family. Part of the 50S ribosomal subunit. Forms a bridge to the 30S subunit in the 70S ribosome.

One of the primary rRNA binding proteins. Required for association of the 30S and 50S subunits to form the 70S ribosome, for tRNA binding and peptide bond formation. It has been suggested to have peptidyltransferase activity; this is somewhat controversial. Makes several contacts with the 16S rRNA in the 70S ribosome. In Salmonella agona (strain SL483), this protein is Large ribosomal subunit protein uL2.